The chain runs to 302 residues: Large ribosomal subunit protein uL3c (302 aa).

The N-terminal 36 residues, 1–36 (MFQSSRLVALGLCAALVLVGGSIILSGLSPNLSSPM), are a transit peptide targeting the chloroplast. Residues 208-239 (FQGSIRRWGMKRGPMSHGSKSHRQHGSIGCSA) form a disordered region.

It belongs to the universal ribosomal protein uL3 family. In terms of assembly, part of the 50S ribosomal subunit.

The protein localises to the plastid. It localises to the chloroplast. One of the primary rRNA binding proteins, it binds directly near the 3'-end of the 23S rRNA, where it nucleates assembly of the 50S subunit. In Bigelowiella natans (Pedinomonas minutissima), this protein is Large ribosomal subunit protein uL3c (RPL3).